We begin with the raw amino-acid sequence, 118 residues long: NADH-ubiquinone oxidoreductase chain 3 (118 aa).

Helical transmembrane passes span 4 to 24 (FAPICIYLVISLLVSLIPLGV) and 87 to 107 (IDPFGSWSMMAFLLILTIGSL).

The protein belongs to the complex I subunit 3 family.

It localises to the mitochondrion membrane. The catalysed reaction is a ubiquinone + NADH + 5 H(+)(in) = a ubiquinol + NAD(+) + 4 H(+)(out). In terms of biological role, core subunit of the mitochondrial membrane respiratory chain NADH dehydrogenase (Complex I) that is believed to belong to the minimal assembly required for catalysis. Complex I functions in the transfer of electrons from NADH to the respiratory chain. The immediate electron acceptor for the enzyme is believed to be ubiquinone. This chain is NADH-ubiquinone oxidoreductase chain 3 (ND3), found in Panax ginseng (Korean ginseng).